A 221-amino-acid polypeptide reads, in one-letter code: Adenylate kinase (221 aa).

10–15 (GAGKGT) lines the ATP pocket. Residues 30 to 59 (STGDMLRAAVKARTELGVAAKKIMDAGGLV) form an NMP region. Residues threonine 31, arginine 36, 57–59 (GLV), 85–88 (GFPR), and glutamine 92 contribute to the AMP site. The segment at 122–159 (GRRVHLASGRTYHIKFNPPKVEGKDDITGDPLIQRDDD) is LID. Residues arginine 123 and 132–133 (TY) each bind ATP. AMP-binding residues include arginine 156 and arginine 167. Serine 207 serves as a coordination point for ATP.

It belongs to the adenylate kinase family. Monomer.

It is found in the cytoplasm. It catalyses the reaction AMP + ATP = 2 ADP. Its pathway is purine metabolism; AMP biosynthesis via salvage pathway; AMP from ADP: step 1/1. Its function is as follows. Catalyzes the reversible transfer of the terminal phosphate group between ATP and AMP. Plays an important role in cellular energy homeostasis and in adenine nucleotide metabolism. The polypeptide is Adenylate kinase (Polynucleobacter necessarius subsp. necessarius (strain STIR1)).